We begin with the raw amino-acid sequence, 101 residues long: Large ribosomal subunit protein eL30 (101 aa).

This sequence belongs to the eukaryotic ribosomal protein eL30 family.

The chain is Large ribosomal subunit protein eL30 from Pyrobaculum islandicum (strain DSM 4184 / JCM 9189 / GEO3).